We begin with the raw amino-acid sequence, 351 residues long: Prostaglandin reductase 2 (351 aa).

99-100 (FY) provides a ligand contact to substrate. NADP(+)-binding positions include 165-168 (GACG), Lys-192, Tyr-208, Asn-231, 253-259 (CGQISQY), 287-289 (FTV), and Asn-337. Residue 288 to 290 (TVL) participates in substrate binding.

Belongs to the NADP-dependent oxidoreductase L4BD family. Monomer. In terms of tissue distribution, widely expressed with highest levels in adipose tissues.

The protein localises to the cytoplasm. It catalyses the reaction 13,14-dihydro-15-oxo-prostaglandin E2 + NAD(+) = 15-oxoprostaglandin E2 + NADH + H(+). It carries out the reaction 13,14-dihydro-15-oxo-prostaglandin E2 + NADP(+) = 15-oxoprostaglandin E2 + NADPH + H(+). The catalysed reaction is 13,14-dihydro-15-oxo-PGF2alpha + NADP(+) = 15-oxoprostaglandin F2alpha + NADPH + H(+). The enzyme catalyses 13,14-dihydro-15-oxo-prostaglandin E1 + NADP(+) = 15-oxoprostaglandin E1 + NADPH + H(+). It catalyses the reaction 13,14-dihydro-15-oxo-prostaglandin F1alpha + NADP(+) = 15-oxoprostaglandin F1alpha + NADPH + H(+). Its function is as follows. Functions as 15-oxo-prostaglandin 13-reductase and acts on 15-keto-PGE1, 15-keto-PGE2, 15-keto-PGE1-alpha and 15-keto-PGE2-alpha with highest activity towards 15-keto-PGE2. Overexpression represses transcriptional activity of PPARG and inhibits adipocyte differentiation. The sequence is that of Prostaglandin reductase 2 from Mus musculus (Mouse).